The sequence spans 298 residues: MSKLISYAAKNTLRNTRLGANPICQHATRDYMHLAAASAARNTYSTPAVGFAKQPVLRQAVNTVAVMGQISRRSMFIQTQDTPNPESLKFLPGVDVLGKGNTYDFPSGSAAHCSPLAKLLFRVEGVRAVFFGGDFITISKEESGEWGLIKPEVFAVIMDFFASGLPVIHEARPNADTEILEDDDETVMMIKELLDTRIRPTVQEDGGDIVFMGYENGIVKLKMQGSCSSCPSSIVTLKNGVQNMLQFYIPEVESVEQVFDDADKMANKEFERFEKSLMQKESVNQPNAPVNIGGGTPN.

The nifU stretch occupies residues 190-258 (IKELLDTRIR…IPEVESVEQV (69 aa)). [4Fe-4S] cluster contacts are provided by Cys227 and Cys230. Over residues 279–288 (QKESVNQPNA) the composition is skewed to polar residues. Residues 279-298 (QKESVNQPNAPVNIGGGTPN) form a disordered region.

It belongs to the NifU family.

Its subcellular location is the mitochondrion. Molecular scaffold for [Fe-S] cluster assembly of mitochondrial iron-sulfur proteins. The chain is NFU1 iron-sulfur cluster scaffold homolog, mitochondrial from Drosophila virilis (Fruit fly).